The sequence spans 107 residues: U1-lycotoxin-Ls1q (107 aa).

The first 20 residues, 1-20 (MMKVLVVVALLVTLISYSSS), serve as a signal peptide directing secretion. A propeptide spanning residues 21-41 (EGIDDLEADELLSLMANEQTR) is cleaved from the precursor. Intrachain disulfides connect cysteine 44/cysteine 59, cysteine 51/cysteine 68, cysteine 58/cysteine 86, and cysteine 70/cysteine 84.

This sequence belongs to the neurotoxin 19 (CSTX) family. 04 (U1-Lctx) subfamily. Expressed by the venom gland.

The protein localises to the secreted. The polypeptide is U1-lycotoxin-Ls1q (Lycosa singoriensis (Wolf spider)).